A 363-amino-acid chain; its full sequence is Actin-related protein 7 (363 aa).

Position 1 is an N-acetylmethionine (Met1).

Belongs to the actin family. Plant ARP7 subfamily. Mostly expressed in flowers, and, to a lower extent, in roots, seedlings, leaves and siliques (at protein level).

Its subcellular location is the nucleus. It is found in the cytoplasm. Its function is as follows. Essential protein required during embryogenesis and all plant development stages, probably through a chromatin-mediated regulation of gene expression. In Arabidopsis thaliana (Mouse-ear cress), this protein is Actin-related protein 7 (ARP7).